Consider the following 349-residue polypeptide: MAPTAPPILDFSPFYGTDGAAKAKLVQQVRESCEYNGFFQITGHRIPRELQVRVMDAAKRFFALPLEEKMAIDKNLNSFNRGYELLRSQMLEVGTAPELKEGLYIGEEIGADHPYYINGRLNSGPNQWPATVPDAQEFRETSMEYYHAVYELAKDVLAVLALTLDVEESFFDPLTEGGVATMRMLHYPSQPKDEDEKLNRGIGAHTDFGCITLLLQDEVDGLQVLDAPSGQWLDVQPVLGAYVVNLGDLMMRMANDRYKSNIHRVINKSGRERYSIPFFFSGNPDHVCKCLPNCCKAGEQPKYPPITVEDMVRGAYKQSYGRAEAYKKELAEKAKAHKIEAASATAMVS.

Residues 178-282 (GVATMRMLHY…RYSIPFFFSG (105 aa)) enclose the Fe2OG dioxygenase domain. The Fe cation site is built by His-205, Asp-207, and His-263. Arg-273 lines the 2-oxoglutarate pocket.

The protein belongs to the iron/ascorbate-dependent oxidoreductase family. It depends on Fe(2+) as a cofactor.

2-oxoglutarate-Fe(II) type oxidoreductase, part of the hnx cluster involved in the purine degradation. The nicotinate hydroxylase hnxS accepts nicotinate as a substrate and catalyzes the first step of nicotinate catabolism. The major facilitator-type transporters hxnP and hxnZ are probably involved in the uptake of nicotinate-derived metabolites, and the oxidoreductases hxnT and hxnY in the further metabolism of 6-OH nicotinic acid. This Emericella nidulans (strain FGSC A4 / ATCC 38163 / CBS 112.46 / NRRL 194 / M139) (Aspergillus nidulans) protein is 2-oxoglutarate-Fe(II) type oxidoreductase hxnY.